The chain runs to 190 residues: Elongation factor P 2 (190 aa).

This sequence belongs to the elongation factor P family.

The protein localises to the cytoplasm. Its pathway is protein biosynthesis; polypeptide chain elongation. Its function is as follows. Involved in peptide bond synthesis. Stimulates efficient translation and peptide-bond synthesis on native or reconstituted 70S ribosomes in vitro. Probably functions indirectly by altering the affinity of the ribosome for aminoacyl-tRNA, thus increasing their reactivity as acceptors for peptidyl transferase. In Chlamydia caviae (strain ATCC VR-813 / DSM 19441 / 03DC25 / GPIC) (Chlamydophila caviae), this protein is Elongation factor P 2 (efp2).